The chain runs to 288 residues: Lipoyl synthase (288 aa).

Residues C39, C44, C50, C65, C69, C72, and S276 each contribute to the [4Fe-4S] cluster site. The Radical SAM core domain occupies 51-265 (WGKGTATFMI…KETGLKKGFE (215 aa)).

This sequence belongs to the radical SAM superfamily. Lipoyl synthase family. The cofactor is [4Fe-4S] cluster.

The protein resides in the cytoplasm. The catalysed reaction is [[Fe-S] cluster scaffold protein carrying a second [4Fe-4S](2+) cluster] + N(6)-octanoyl-L-lysyl-[protein] + 2 oxidized [2Fe-2S]-[ferredoxin] + 2 S-adenosyl-L-methionine + 4 H(+) = [[Fe-S] cluster scaffold protein] + N(6)-[(R)-dihydrolipoyl]-L-lysyl-[protein] + 4 Fe(3+) + 2 hydrogen sulfide + 2 5'-deoxyadenosine + 2 L-methionine + 2 reduced [2Fe-2S]-[ferredoxin]. Its pathway is protein modification; protein lipoylation via endogenous pathway; protein N(6)-(lipoyl)lysine from octanoyl-[acyl-carrier-protein]: step 2/2. Functionally, catalyzes the radical-mediated insertion of two sulfur atoms into the C-6 and C-8 positions of the octanoyl moiety bound to the lipoyl domains of lipoate-dependent enzymes, thereby converting the octanoylated domains into lipoylated derivatives. The chain is Lipoyl synthase from Bacteroides fragilis (strain ATCC 25285 / DSM 2151 / CCUG 4856 / JCM 11019 / LMG 10263 / NCTC 9343 / Onslow / VPI 2553 / EN-2).